We begin with the raw amino-acid sequence, 289 residues long: Melatonin receptor type 1B (289 aa).

Topologically, residues 1–2 are cytoplasmic; sequence GN. Residues 3 to 23 traverse the membrane as a helical segment; sequence AFVVSLALADLVVALYPYPLV. Over 24-41 the chain is Extracellular; that stretch reads LLAIFHNGWTLGEMHCKV. A disulfide bond links C39 and C116. A helical transmembrane segment spans residues 42 to 62; it reads SGFVMGLSVIGSIFNITAIAI. The Cytoplasmic segment spans residues 63–81; that stretch reads NRYCYICHSFAYDKVYSCW. The chain crosses the membrane as a helical span at residues 82-102; that stretch reads NTMLYVSLIWVLTVIATVPNF. Residues 103–126 are Extracellular-facing; it reads FVGSLKYDPRIYSCTFVQTASSYY. A helical membrane pass occupies residues 127–147; it reads TIAVVVIHFIVPITVVSFCYL. The Cytoplasmic segment spans residues 148-179; it reads RIWVLVLQVRRRVKSETKPRLKPSDFRNFLTM. The chain crosses the membrane as a helical span at residues 180–200; it reads FVVFVIFAFCWAPLNFIGLAV. Topologically, residues 201–213 are extracellular; that stretch reads AINPSEMAPKVPE. Residues 214-234 form a helical membrane-spanning segment; that stretch reads WLFIISYFMAYFNSCLNAIIY. The Cytoplasmic portion of the chain corresponds to 235 to 289; the sequence is GLLNQNFRNEYKRILMSLWMPRLFFQDTSKGGTDGQKSKPSPALNNNDQMKTDTL. The interval 264 to 289 is disordered; the sequence is KGGTDGQKSKPSPALNNNDQMKTDTL.

Belongs to the G-protein coupled receptor 1 family. Brain and kidney, with trace levels in lungs.

The protein resides in the cell membrane. Functionally, high affinity receptor for melatonin. The activity of this receptor is mediated by pertussis toxin sensitive G proteins that inhibits adenylate cyclase activity. The chain is Melatonin receptor type 1B from Gallus gallus (Chicken).